Reading from the N-terminus, the 221-residue chain is Ribonuclease T (221 aa).

Positions 21 to 195 constitute an Exonuclease domain; sequence VVIDIESAGF…YDTIQTAYLF (175 aa). Mg(2+) contacts are provided by Asp-24, Glu-26, His-182, and Asp-187. The active-site Proton donor/acceptor is His-182.

It belongs to the RNase T family. In terms of assembly, homodimer. Mg(2+) is required as a cofactor.

Trims short 3' overhangs of a variety of RNA species, leaving a one or two nucleotide 3' overhang. Responsible for the end-turnover of tRNA: specifically removes the terminal AMP residue from uncharged tRNA (tRNA-C-C-A). Also appears to be involved in tRNA biosynthesis. This chain is Ribonuclease T, found in Buchnera aphidicola subsp. Cinara cedri (strain Cc).